A 565-amino-acid chain; its full sequence is Ubiquitin carboxyl-terminal hydrolase 21 (565 aa).

The span at 1 to 14 shows a compositional bias: basic and acidic residues; it reads MPQASEHRLGRTRE. Disordered stretches follow at residues 1-103, 109-128, and 142-163; these read MPQA…LPLP, ARSKSVSSGDLRPMGIALGG, and LALRPEPPPLRRSTSLRRLGGF. The segment covering 42–57 has biased composition (pro residues); that stretch reads APGPNPMLRPLPPRPG. Positions 58 to 70 are enriched in basic and acidic residues; sequence PPEERLKKLELGR. The span at 71–82 shows a compositional bias: low complexity; sequence GRTSGPRPSGPL. A Nuclear export signal motif is present at residues 134-152; sequence ELGAALSRLALRPEPPPLR. Positions 212–558 constitute a USP domain; it reads VGLRNLGNTC…EGYVLFYQLM (347 aa). The Nucleophile role is filled by C221. C384, C387, C437, and C440 together coordinate Zn(2+). H518 functions as the Proton acceptor in the catalytic mechanism.

This sequence belongs to the peptidase C19 family. USP21 subfamily. Interacts with BEND3.

Its subcellular location is the cytoplasm. It is found in the nucleus. The enzyme catalyses Thiol-dependent hydrolysis of ester, thioester, amide, peptide and isopeptide bonds formed by the C-terminal Gly of ubiquitin (a 76-residue protein attached to proteins as an intracellular targeting signal).. Its function is as follows. Deubiquitinating enzyme that hydrolyzes 'Lys-6'- and 'Lys-11'-linked polyubiquitin. Also hydrolyzes heterotypic (mixed and branched) and homotypic chains. Important regulator of energy metabolism. Glucose and fatty acids trigger its nuclear translocation by CBP-dependent acetylation. In the nucleus, deubiquitinates and stabilizes the nuclear receptor PPARD regulating the expression of various genes involved in glucose and lipid metabolism and oxidative phosphorylation. Also acts as a negative regulator of the ribosome quality control (RQC) by mediating deubiquitination of 40S ribosomal proteins RPS10/eS10 and RPS20/uS10, thereby antagonizing ZNF598-mediated 40S ubiquitination. The chain is Ubiquitin carboxyl-terminal hydrolase 21 (USP21) from Bos taurus (Bovine).